The following is a 350-amino-acid chain: MAAGGNGAGGDTRAAFARIYKTLKEELLTDPAFEFTEESRQWIDRMVDYNVLGGKCNRGLSVVDSYKLLKGADALGEEETFLACTLGWCIEWLQAFFLVLDDIMDDSHTRRGQPCWFRVPQVGLIAANDGIILRNHISRILRRHFKGKPYYADLLDLFNEVEFKTASGQLLDLITTHEGEKDLTKYNITVHGRIVQYKTAYYSFYLPVACALLLSGENLDNYGDVENILVEMGTYFQVQDDYLDCYGDPEFIGKIGTDIEDYKCSWLVVQALERADESQKRILFENYGKKDPACVAKVKNLYKELDLEAVFQEYENESYKKLIADIEAQPSIAVQKVLKSFLHKIYKRQK.

Isopentenyl diphosphate is bound by residues Lys-55, Arg-58, and Gln-94. Mg(2+)-binding residues include Asp-101 and Asp-105. Arg-110 is a binding site for dimethylallyl diphosphate. An isopentenyl diphosphate-binding site is contributed by Arg-111. Positions 198, 199, 237, 254, and 263 each coordinate dimethylallyl diphosphate.

The protein belongs to the FPP/GGPP synthase family. Requires Mg(2+) as cofactor.

The protein resides in the cytoplasm. It carries out the reaction isopentenyl diphosphate + dimethylallyl diphosphate = (2E)-geranyl diphosphate + diphosphate. The catalysed reaction is isopentenyl diphosphate + (2E)-geranyl diphosphate = (2E,6E)-farnesyl diphosphate + diphosphate. It participates in isoprenoid biosynthesis; farnesyl diphosphate biosynthesis; farnesyl diphosphate from geranyl diphosphate and isopentenyl diphosphate: step 1/1. Its pathway is isoprenoid biosynthesis; geranyl diphosphate biosynthesis; geranyl diphosphate from dimethylallyl diphosphate and isopentenyl diphosphate: step 1/1. Its function is as follows. Catalyzes the sequential condensation of isopentenyl pyrophosphate with the allylic pyrophosphates, dimethylallyl pyrophosphate, and then with the resultant geranylpyrophosphate to the ultimate product farnesyl pyrophosphate. This chain is Farnesyl pyrophosphate synthase (FPS), found in Zea mays (Maize).